The following is a 365-amino-acid chain: Chaperone protein DnaJ (365 aa).

The 67-residue stretch at 4–70 folds into the J domain; the sequence is DYYKILGVDR…QKRRMYDQTG (67 aa). Residues 139-220 form a CR-type zinc finger; that stretch reads GTEKRIKYRR…CNGTGTVVVN (82 aa). Zn(2+)-binding residues include Cys152, Cys155, Cys168, Cys171, Cys194, Cys197, Cys208, and Cys211. 4 CXXCXGXG motif repeats span residues 152–159, 168–175, 194–201, and 208–215; these read CPDCNGTG, CPTCNGTG, CQTCGGRG, and CPRCNGTG.

This sequence belongs to the DnaJ family. In terms of assembly, homodimer. Zn(2+) is required as a cofactor.

Its subcellular location is the cytoplasm. Functionally, participates actively in the response to hyperosmotic and heat shock by preventing the aggregation of stress-denatured proteins and by disaggregating proteins, also in an autonomous, DnaK-independent fashion. Unfolded proteins bind initially to DnaJ; upon interaction with the DnaJ-bound protein, DnaK hydrolyzes its bound ATP, resulting in the formation of a stable complex. GrpE releases ADP from DnaK; ATP binding to DnaK triggers the release of the substrate protein, thus completing the reaction cycle. Several rounds of ATP-dependent interactions between DnaJ, DnaK and GrpE are required for fully efficient folding. Also involved, together with DnaK and GrpE, in the DNA replication of plasmids through activation of initiation proteins. This Thermoplasma acidophilum (strain ATCC 25905 / DSM 1728 / JCM 9062 / NBRC 15155 / AMRC-C165) protein is Chaperone protein DnaJ.